A 681-amino-acid polypeptide reads, in one-letter code: Chaperone protein htpG (681 aa).

The interval Met-1 to Arg-326 is a; substrate-binding. Positions Ser-327–Asn-545 are b. Residues Ile-546–Ile-681 form a c region.

The protein belongs to the heat shock protein 90 family. Homodimer.

The protein resides in the cytoplasm. Molecular chaperone. Has ATPase activity. This is Chaperone protein htpG from Bacteroides fragilis (strain YCH46).